Here is a 238-residue protein sequence, read N- to C-terminus: tRNA (guanine-N(7)-)-methyltransferase (238 aa).

Residues Glu70, Asp95, Asp122, and Asp145 each contribute to the S-adenosyl-L-methionine site. Asp145 is a catalytic residue. Substrate contacts are provided by residues Lys149, Asp181, and 216 to 219 (TKFE).

The protein belongs to the class I-like SAM-binding methyltransferase superfamily. TrmB family.

The catalysed reaction is guanosine(46) in tRNA + S-adenosyl-L-methionine = N(7)-methylguanosine(46) in tRNA + S-adenosyl-L-homocysteine. It functions in the pathway tRNA modification; N(7)-methylguanine-tRNA biosynthesis. In terms of biological role, catalyzes the formation of N(7)-methylguanine at position 46 (m7G46) in tRNA. In Neisseria meningitidis serogroup A / serotype 4A (strain DSM 15465 / Z2491), this protein is tRNA (guanine-N(7)-)-methyltransferase.